The chain runs to 536 residues: MSLPPFTCRLLAAAAALYLIGLLCVGADTKDVTAPKIPGCSNEFQMVKVENWVNGENGETFTAMTAQFGTMLPSDKDKAVKLPVALTTPLDSCSNLTSKLSWSIALSVRGECAFTVKAQVAQAGGAAALVLINDKEELDEMVCGEKDTSLNVSIPILMITTSSGDALKKSIMQNKKVELLLYAPKSPIVDYAVVFLWLMSVGTVFVASVWSHVTSPKKNDEQYDELSPKKSSNVDATKGGAEEETLDISAMGAVIFVISASTFLVLLFFFMSSWFILILTIFFVIGGMQGMHNINVTLITRRCSKCGQKNLKLPLLGNTSILSLVVLLFCFVVAILWFMNRKTSHAWAGQDIFGICMMINVLQVARLPNIRVATILLCCAFFYDIFWVFISPLIFKQSVMIAVARGSKDTGESIPMLLRIPRLSDPWGGYNMIGFGDILFPGLLICFIFRFDKENNKGVSNGYFPWLMFGYGLGLFLTYLGLYVMNGHGQPALLYLVPCTLGITVILGLVRKELRDLWNYGTQQPSAADVNPSPEA.

A signal peptide spans 1 to 29 (MSLPPFTCRLLAAAAALYLIGLLCVGADT). Residues 30-186 (KDVTAPKIPG…VELLLYAPKS (157 aa)) are Lumenal-facing. Residues 94 to 170 (SNLTSKLSWS…TSSGDALKKS (77 aa)) form the PA domain. 2 N-linked (GlcNAc...) asparagine glycosylation sites follow: asparagine 95 and asparagine 151. Residues 187–207 (PIVDYAVVFLWLMSVGTVFVA) form a helical membrane-spanning segment. At 208 to 243 (SVWSHVTSPKKNDEQYDELSPKKSSNVDATKGGAEE) the chain is on the cytoplasmic side. A disordered region spans residues 218-238 (KNDEQYDELSPKKSSNVDATK). A helical transmembrane segment spans residues 244–264 (ETLDISAMGAVIFVISASTFL). The Lumenal segment spans residues 265 to 273 (VLLFFFMSS). The helical transmembrane segment at 274–296 (WFILILTIFFVIGGMQGMHNINV) threads the bilayer. The Cytoplasmic portion of the chain corresponds to 297–318 (TLITRRCSKCGQKNLKLPLLGN). A helical membrane pass occupies residues 319 to 339 (TSILSLVVLLFCFVVAILWFM). Topologically, residues 340–344 (NRKTS) are lumenal. Residues 345-365 (HAWAGQDIFGICMMINVLQVA) traverse the membrane as a helical segment. The Cytoplasmic portion of the chain corresponds to 366–374 (RLPNIRVAT). The helical transmembrane segment at 375–395 (ILLCCAFFYDIFWVFISPLIF) threads the bilayer. The active site involves aspartate 384. Over 396–428 (KQSVMIAVARGSKDTGESIPMLLRIPRLSDPWG) the chain is Lumenal. A helical transmembrane segment spans residues 429–449 (GYNMIGFGDILFPGLLICFIF). Aspartate 437 is an active-site residue. The Cytoplasmic portion of the chain corresponds to 450 to 463 (RFDKENNKGVSNGY). The helical transmembrane segment at 464 to 484 (FPWLMFGYGLGLFLTYLGLYV) threads the bilayer. Over 485-489 (MNGHG) the chain is Lumenal. The chain crosses the membrane as a helical span at residues 490 to 510 (QPALLYLVPCTLGITVILGLV). The PAL signature appears at 491 to 493 (PAL). Residues 511-536 (RKELRDLWNYGTQQPSAADVNPSPEA) are Cytoplasmic-facing.

It belongs to the peptidase A22B family. In terms of processing, glycosylated.

It localises to the endosome membrane. Functionally, intramembrane-cleaving aspartic protease (I-CLiP) that cleaves type II membrane signal peptides in the hydrophobic plane of the membrane. The chain is Signal peptide peptidase-like 5 (SPPL5) from Arabidopsis thaliana (Mouse-ear cress).